Here is a 149-residue protein sequence, read N- to C-terminus: Low molecular weight protein-tyrosine-phosphatase Wzb (149 aa).

The active-site Nucleophile is the Cys-9. Residue Arg-15 is part of the active site. The Proton donor role is filled by Asp-115.

The protein belongs to the low molecular weight phosphotyrosine protein phosphatase family.

The enzyme catalyses O-phospho-L-tyrosyl-[protein] + H2O = L-tyrosyl-[protein] + phosphate. Its pathway is glycan metabolism; exopolysaccharide biosynthesis. In terms of biological role, dephosphorylates Wzc. Required for the extracellular polysaccharide colanic acid synthesis. Probably involved in the export of colanic acid from the cell to medium. Involved in protection of cells against contact-dependent growth inhibition (CDI). The polypeptide is Low molecular weight protein-tyrosine-phosphatase Wzb (wzb) (Salmonella typhi).